Reading from the N-terminus, the 377-residue chain is Bradyzoite pseudokinase 1 (377 aa).

An N-terminal signal peptide occupies residues 1 to 26 (MANTSVRRRQLLSSVLLLQWLTTVLG). Positions 39 to 58 (HGQFPSLRRTEGVSQSGSGH) are disordered. One can recognise a Protein kinase domain in the interval 48 to 354 (TEGVSQSGSG…IEEIMKDPLF (307 aa)).

It belongs to the protein kinase superfamily. STE Ser/Thr protein kinase family. WNG subfamily. In terms of assembly, forms a complex composed of BPK1, MCP4, MAG1, GRA8 and GRA9. Interacts with MCP4. Interacts with MAG1. Interacts with GRA8. Interacts with GRA9.

The protein localises to the secreted. In terms of biological role, required for the growth, maintenance, and/or stability, and thus infectivity, of bradyzoite cysts. The polypeptide is Bradyzoite pseudokinase 1 (Toxoplasma gondii).